We begin with the raw amino-acid sequence, 277 residues long: MNIKKWIKKSIQKLSHVDNPKFESELLLSYVTKHTRSFIISSDEIQLTEKQYKYLNHLIHRRSLGEPIAYIIKEKEFWSLSLCVSYDTLIPRPDTEILVERALSKIKSNSACILDLGTGCGAIALALASINSNWNIIGIDKSENALAIARINASKLNFKNVTFFFSDWFLNIKKKFNIIVSNPPYVSKKEIKFFKKDIFFEPLSALISDNNGLSDIENIIKNSKHYLFYGGWLMIEHGWRQKVKVQYLFKKYNFHEIESYQDYGGNDRVTIGKKYDK.

S-adenosyl-L-methionine is bound by residues G117–G121, D140, W168, and N182. Residue N182–Y185 coordinates substrate.

This sequence belongs to the protein N5-glutamine methyltransferase family. PrmC subfamily.

It catalyses the reaction L-glutaminyl-[peptide chain release factor] + S-adenosyl-L-methionine = N(5)-methyl-L-glutaminyl-[peptide chain release factor] + S-adenosyl-L-homocysteine + H(+). In terms of biological role, methylates the class 1 translation termination release factors RF1/PrfA and RF2/PrfB on the glutamine residue of the universally conserved GGQ motif. This Buchnera aphidicola subsp. Acyrthosiphon pisum (strain APS) (Acyrthosiphon pisum symbiotic bacterium) protein is Release factor glutamine methyltransferase.